A 389-amino-acid polypeptide reads, in one-letter code: Zinc finger C2HC domain-containing protein 1C homolog (389 aa).

2 disordered regions span residues 16–44 and 84–115; these read MLPH…SQQS and SYPH…GPQS. 2 stretches are compositionally biased toward polar residues: residues 35–44 and 90–102; these read YEQGDSSQQS and GISQ…DSQG. A coiled-coil region spans residues 211-266; sequence VQIRRLEAAGESLEEEIRRKQILLRGKLKKTEEELRRIQMQKEQAKENENRELQKI. Disordered stretches follow at residues 301–320 and 343–389; these read REDE…QLSD and SELS…PQLG. Residues 307-317 are compositionally biased toward polar residues; the sequence is GRSQQNSSPFQ. Over residues 368–382 the composition is skewed to low complexity; sequence SSLSMAPDSSGSSGS.

It belongs to the ZC2HC1 family.

The sequence is that of Zinc finger C2HC domain-containing protein 1C homolog (ZC2HC1C) from Pongo abelii (Sumatran orangutan).